We begin with the raw amino-acid sequence, 1040 residues long: Multidrug resistance protein MdtB (1040 aa).

12 helical membrane passes run Phe-16–Ile-36, Leu-347–Ala-367, Ile-369–Leu-389, Leu-396–Ile-416, Ile-440–Phe-460, Phe-472–Pro-492, Trp-537–Ile-557, Leu-863–Ile-883, Phe-888–Ala-908, Ile-911–Val-931, Ile-968–Val-988, and Ile-998–Ile-1018.

The protein belongs to the resistance-nodulation-cell division (RND) (TC 2.A.6) family. MdtB subfamily. Part of a tripartite efflux system composed of MdtA, MdtB and MdtC. MdtB forms a heteromultimer with MdtC.

It localises to the cell inner membrane. The sequence is that of Multidrug resistance protein MdtB from Shigella sonnei (strain Ss046).